Here is a 285-residue protein sequence, read N- to C-terminus: Protoheme IX farnesyltransferase (285 aa).

The next 8 membrane-spanning stretches (helical) occupy residues 19 to 39, 40 to 60, 90 to 110, 111 to 131, 135 to 155, 165 to 185, 220 to 240, and 265 to 285; these read RIIWLLDLAALSGAFLSGKLM, PLSILAVLVGGTFASAGSMII, AIYVGIALLTLGTLVGLLDNP, LTSFFILLGGLVYVLVYTVWL, SPLNIVIGGLAGSAAAWAGYA, SILLGLLIFMWTPGHFWALAL, IPFALALYLYAGVIYGIVAGI, and FKFSSPYLAILLILIILTRLI.

This sequence belongs to the UbiA prenyltransferase family. Protoheme IX farnesyltransferase subfamily.

It localises to the cell membrane. The enzyme catalyses heme b + (2E,6E)-farnesyl diphosphate + H2O = Fe(II)-heme o + diphosphate. Its pathway is porphyrin-containing compound metabolism; heme O biosynthesis; heme O from protoheme: step 1/1. Converts heme B (protoheme IX) to heme O by substitution of the vinyl group on carbon 2 of heme B porphyrin ring with a hydroxyethyl farnesyl side group. The chain is Protoheme IX farnesyltransferase from Metallosphaera sedula (strain ATCC 51363 / DSM 5348 / JCM 9185 / NBRC 15509 / TH2).